A 78-amino-acid chain; its full sequence is Defensin-like protein 201 (78 aa).

The N-terminal stretch at 1-22 (MRNLINFAVLIMTIFIVSASGA) is a signal peptide. 4 disulfides stabilise this stretch: cysteine 32–cysteine 78, cysteine 41–cysteine 61, cysteine 46–cysteine 71, and cysteine 50–cysteine 73.

Belongs to the DEFL family.

The protein resides in the secreted. This is Defensin-like protein 201 from Arabidopsis thaliana (Mouse-ear cress).